The following is an 807-amino-acid chain: Mechanosensitive cation channel TMEM63A (807 aa).

Residues 1–51 lie on the Extracellular side of the membrane; it reads MMDSPFLELWQSKAVSIREQLGLGDRPNDSYCYNSAKNSTVLQGVTFGGIP. Asn38 carries N-linked (GlcNAc...) asparagine glycosylation. A helical membrane pass occupies residues 52–74; it reads TVLLIDVSCFLFLILVFSIIRRR. At 75-134 the chain is on the cytoplasmic side; that stretch reads FWDYGRIALVSEADSESRFQRLSSTSSSGQQDFENELGCCPWLTAIFRLHDDQILEWCGE. A helical membrane pass occupies residues 135–167; sequence DAIHYLSFQRHIIFLLVVVSFLSLCVILPVNLS. The Extracellular portion of the chain corresponds to 168–191; it reads GDLLDKDPYSFGRTTIANLQTDND. A helical membrane pass occupies residues 192–217; the sequence is LLWLHTIFAVIYLFLTVGFMRHHTQS. Residues 218–416 lie on the Cytoplasmic side of the membrane; sequence IKYKEENLVR…CWKNLSIQGL (199 aa). The tract at residues 219 to 414 is intracellular linker IL2; confers mechanosensitivity; that stretch reads KYKEENLVRR…DICWKNLSIQ (196 aa). A helical membrane pass occupies residues 417 to 444; that stretch reads RWWLQWLGINFTLFLGLFFLTTPSIILS. The Extracellular portion of the chain corresponds to 445-462; sequence TMDKFNVTKPIHALNNPI. N-linked (GlcNAc...) asparagine glycosylation is present at Asn450. Residues 463 to 490 form a helical membrane-spanning segment; the sequence is ISQFFPTLLLWSFSALLPSIVYYSTLLE. At 491-495 the chain is on the cytoplasmic side; that stretch reads SHWTK. Residues 496–532 form a helical membrane-spanning segment; sequence SGENQIMMTKVYIFLIFMVLILPSLGLTSLDFFFRWL. Residues 533 to 554 lie on the Extracellular side of the membrane; sequence FDKTSSEASIRLECVFLPDQGA. The chain crosses the membrane as a helical span at residues 555 to 586; the sequence is FFVNYVIASAFIGNGMELLRLPGLILYTFRMI. Residues 555 to 586 are gating helix; sequence FFVNYVIASAFIGNGMELLRLPGLILYTFRMI. At 587–606 the chain is on the cytoplasmic side; sequence MAKTAADRRNVKQNQAFQYE. A helical transmembrane segment spans residues 607–624; sequence FGAMYAWMLCVFTVIVAY. Residues 625–628 lie on the Extracellular side of the membrane; the sequence is SITC. Residues 629-651 form a helical membrane-spanning segment; it reads PIIAPFGLIYILLKHMVDRHNLY. The Cytoplasmic portion of the chain corresponds to 652–661; it reads FVYLPAKLEK. A helical membrane pass occupies residues 662–689; it reads GIHFAAVNQALAAPILCLFWLYFFSFLR. Topologically, residues 690–694 are extracellular; the sequence is LGMKA. Residues 695–709 form a helical membrane-spanning segment; it reads PATLFTFLVLLLTIL. Residues 710-807 lie on the Cytoplasmic side of the membrane; that stretch reads VCLAHTCFGC…GSVAAAPQEA (98 aa). A Phosphoserine modification is found at Ser739.

It belongs to the CSC1 (TC 1.A.17) family. As to quaternary structure, monomer. In terms of processing, N-Glycosylated.

The protein resides in the lysosome membrane. It localises to the early endosome membrane. The protein localises to the cell membrane. The enzyme catalyses Ca(2+)(in) = Ca(2+)(out). Functionally, mechanosensitive cation channel with low conductance and high activation threshold. In contrast to TMEM63B, does not show phospholipid scramblase activity. Acts as a regulator of lysosomal morphology by mediating lysosomal mechanosensitivity. Important for the baby's first breath and respiration throughout life. Upon lung inflation conducts cation currents in alveolar type 1 and 2 cells triggering lamellar body exocytosis and surfactant secretion into airspace. Also acts as an osmosensitive cation channel preferentially activated by hypotonic stress. This chain is Mechanosensitive cation channel TMEM63A, found in Homo sapiens (Human).